Here is a 347-residue protein sequence, read N- to C-terminus: NAD-dependent alcohol dehydrogenase (347 aa).

K11 bears the N6-methyllysine; partial mark. Residues C38, H68, E98, C101, C104, C112, and C154 each coordinate Zn(2+). N6-methyllysine; partial is present on K213.

This sequence belongs to the zinc-containing alcohol dehydrogenase family. In terms of assembly, homodimer and homotetramer. Zn(2+) serves as cofactor.

It catalyses the reaction a primary alcohol + NAD(+) = an aldehyde + NADH + H(+). The enzyme catalyses a secondary alcohol + NAD(+) = a ketone + NADH + H(+). The chain is NAD-dependent alcohol dehydrogenase (adh) from Saccharolobus solfataricus (strain ATCC 35092 / DSM 1617 / JCM 11322 / P2) (Sulfolobus solfataricus).